We begin with the raw amino-acid sequence, 352 residues long: MSDTLPLLLRAARGEAVERPPVWMMRQAGRYMKIYRDLRDKYPSFRERSENPDLSYEISMQPFHAFKPDGVILFSDILTPLPGMGIDFDIIESKGPQIGDPIRSMDQVNALRPLNPSESMPFVGEVLGRLRESVGNEAAVLGFVGAPWTLAAYVVEGKSSKNYAVIKAMAFREPELLHKLLDHFAESIANYLRFQIDSGAQVVQMFDSWAGQLSPADYDTFAAPYQKKVVDLVKQTHPDTPFILYISGSAGVLERMATTGVDIISLDWTVDMGEALARLPEHIGVQGNVDPGLLFGTPDAIEARIDDCVRKARGRKHILNLGHGILPGTPEENGAAFFRSGKSVIDRIGAFA.

Residues 26 to 30 (RQAGR), phenylalanine 45, aspartate 76, tyrosine 153, serine 208, and histidine 323 each bind substrate.

This sequence belongs to the uroporphyrinogen decarboxylase family. Homodimer.

It is found in the cytoplasm. The catalysed reaction is uroporphyrinogen III + 4 H(+) = coproporphyrinogen III + 4 CO2. Its pathway is porphyrin-containing compound metabolism; protoporphyrin-IX biosynthesis; coproporphyrinogen-III from 5-aminolevulinate: step 4/4. Catalyzes the decarboxylation of four acetate groups of uroporphyrinogen-III to yield coproporphyrinogen-III. The protein is Uroporphyrinogen decarboxylase of Parasynechococcus marenigrum (strain WH8102).